Reading from the N-terminus, the 337-residue chain is tRNA N(3)-cytidine methyltransferase METTL2 (337 aa).

Residues tryptophan 66, tyrosine 70, glycine 140, aspartate 165, aspartate 191, and isoleucine 212 each contribute to the S-adenosyl-L-methionine site.

The protein belongs to the methyltransferase superfamily. METL family. In terms of assembly, monomer.

It localises to the cytoplasm. The catalysed reaction is cytidine(32) in tRNA(Thr) + S-adenosyl-L-methionine = N(3)-methylcytidine(32) in tRNA(Thr) + S-adenosyl-L-homocysteine + H(+). It carries out the reaction cytidine(32) in tRNA(Arg)(CCU) + S-adenosyl-L-methionine = N(3)-methylcytidine(32) in tRNA(Arg)(CCU) + S-adenosyl-L-homocysteine + H(+). Functionally, S-adenosyl-L-methionine-dependent methyltransferase that mediates N(3)-methylcytidine modification of residue 32 of the tRNA anticodon loop of tRNA(Thr)(UGU) and tRNA(Arg)(CCU). N(3)-methylcytidine methylation by mettl2 requires the N6-threonylcarbamoylation of tRNA (t6A37) by the EKC/KEOPS complex as prerequisite. The chain is tRNA N(3)-cytidine methyltransferase METTL2 (mettl2) from Xenopus tropicalis (Western clawed frog).